A 66-amino-acid polypeptide reads, in one-letter code: Large ribosomal subunit protein bL35 (66 aa).

The segment at 1 to 42 (MPKQKTHRASAKRFKRTANGGLKRHHAYTGHRFHGKTKKQRR) is disordered.

Belongs to the bacterial ribosomal protein bL35 family.

This chain is Large ribosomal subunit protein bL35, found in Lactobacillus gasseri (strain ATCC 33323 / DSM 20243 / BCRC 14619 / CIP 102991 / JCM 1131 / KCTC 3163 / NCIMB 11718 / NCTC 13722 / AM63).